Reading from the N-terminus, the 126-residue chain is MAIIGLGTDIVEIARIEGVVERSGERLAKRILSELEWEQYQQHEKPVRFLAKRFAVKEAAAKALGTGIRNGLAFNQFEVVNDALGKPILRLYGAAAALAQQLGATSLHVTLADERRYACATVILER.

Mg(2+) contacts are provided by aspartate 9 and glutamate 58.

This sequence belongs to the P-Pant transferase superfamily. AcpS family. Requires Mg(2+) as cofactor.

Its subcellular location is the cytoplasm. It carries out the reaction apo-[ACP] + CoA = holo-[ACP] + adenosine 3',5'-bisphosphate + H(+). Functionally, transfers the 4'-phosphopantetheine moiety from coenzyme A to a Ser of acyl-carrier-protein. The polypeptide is Holo-[acyl-carrier-protein] synthase (Photorhabdus laumondii subsp. laumondii (strain DSM 15139 / CIP 105565 / TT01) (Photorhabdus luminescens subsp. laumondii)).